The sequence spans 1069 residues: Protocadherin-7 (1069 aa).

The signal sequence occupies residues 1-28 (MLRMRTAGWARGWCLGCCLLLPLSLSLA). 7 consecutive Cadherin domains span residues 29 to 143 (AAKQ…TPTF), 144 to 308 (PSPV…SPRF), 309 to 415 (EKSV…VPSI), 424 to 535 (PLKD…PPMF), 536 to 639 (GQSV…DPKF), 640 to 742 (MQDV…APTV), and 745 to 862 (PKNI…IPLT). Residues 29–879 (AAKQLLRYRL…SYEISKQRLS (851 aa)) lie on the Extracellular side of the membrane. The N-linked (GlcNAc...) asparagine glycan is linked to asparagine 79. Residues 182-242 (LLQEPGGGGS…GGTNPGGRSS (61 aa)) are disordered. Residues 207–221 (PGGGGNGASGGGSGG) show a composition bias toward gly residues. Asparagine 689, asparagine 747, asparagine 780, asparagine 822, asparagine 840, and asparagine 845 each carry an N-linked (GlcNAc...) asparagine glycan. Residues 880–900 (IVIGVVAGIMTVILIILIVVM) traverse the membrane as a helical segment. At 901–1069 (ARYCRSKNKN…RLHPYITVFG (169 aa)) the chain is on the cytoplasmic side. Positions 910 to 988 (NGYEAGKKDH…RYRSVNGGPG (79 aa)) are disordered. Basic residues predominate over residues 930–944 (KSKKPKKDKKNKKSK). A phosphoserine mark is found at serine 989 and serine 1011.

Expressed predominantly in brain and heart and at lower levels in various other tissues.

The protein localises to the cell membrane. This chain is Protocadherin-7 (PCDH7), found in Homo sapiens (Human).